Reading from the N-terminus, the 629-residue chain is MSSESTTFIVDVSPSMMKNNNVSKSMAYLEYTLLNKSKKSRKTDWISCYLANCPVSENSQEIPNVFQIQSFLAPVTTTATIGFIKRLKQYCDQHSHDSSNEGLQSMIQCLLVVSLDIKQQFQARKILKQIVVFTDNLDDLDITDEEIDLLTEELSTRIILIDCGKDTQEERKKSNWLKLVEAIPNSRIYNMNELLVEITSPATSVVKPVRVFSGELRLGADILSTQTSNPSGSMQDENCLCIKVEAFPATKAVSGLNRKTAVEVEDSQKKERYVGVKSIIEYEIHNEGNKKNVSEDDQSGSSYIPVTISKDSVTKAYRYGADYVVLPSVLVDQTVYESFPGLDLRGFLNREALPRYFLTSESSFITADTRLGCQSDLMAFSALVDVMLENRKIAVARYVSKKDSEVNMCALCPVLIEHSNINSEKKFVKSLTLCRLPFAEDERVTDFPKLLDRTTTSGVPLKKETDGHQIDELMEQFVDSMDTDELPEIPLGNYYQPIGEVTTDTTLPLPSLNKDQEENKKDPLRIPTVFVYRQQQVLLEWIHQLMINDSREFEIPELPDSLKNKISPYTHKKFDSTKLVEVLGIKKVDKLKLDSELKTELEREKIPDLETLLKRGEQHSRGSPNNSNN.

Residues 254–476 (SGLNRKTAVE…GHQIDELMEQ (223 aa)) enclose the Ku domain. The segment covering 608-620 (DLETLLKRGEQHS) has biased composition (basic and acidic residues). The disordered stretch occupies residues 608 to 629 (DLETLLKRGEQHSRGSPNNSNN).

Belongs to the ku80 family. As to quaternary structure, heterodimer of YKU70/HDF1 and YKU80/HDF2. Interacts with SIR4.

Its subcellular location is the nucleus. The protein localises to the chromosome. The protein resides in the telomere. It carries out the reaction ATP + H2O = ADP + phosphate + H(+). In terms of biological role, single-stranded DNA-dependent ATP-dependent helicase. Involved in non-homologous end joining (NHEJ) DNA double strand break repair. DNA-binding is sequence-independent but has a high affinity to nicks in double-stranded DNA and to the ends of duplex DNA. Binds to naturally occurring chromosomal ends, and therefore provides chromosomal end protection. Appears to have a role in recruitment of telomerase and CDC13 to the telomere and the subsequent telomere elongation. Required also for telomere recombination to repair telomeric ends in the absence of telomerase. KU70, of the KU70/KU80 heterodimer, binds to the stem loop of TLC1, the RNA component of telomerase. Involved in telomere maintenance. Interacts with telomeric repeats and subtelomeric sequences thereby controlling telomere length and protecting against subtelomeric rearrangement. Maintains telomeric chromatin, which is involved in silencing the expression of genes located at the telomere. Required for mating-type switching. This is ATP-dependent DNA helicase II subunit 2 (YKU80) from Saccharomyces cerevisiae (strain ATCC 204508 / S288c) (Baker's yeast).